The chain runs to 161 residues: Allophycocyanin beta chain (161 aa).

N4-methylasparagine is present on N71. Residue C81 participates in (2R,3E)-phycocyanobilin binding.

It belongs to the phycobiliprotein family. As to quaternary structure, heterodimer of an alpha and a beta chain. Contains one covalently linked phycocyanobilin chromophore.

It is found in the cellular thylakoid membrane. In terms of biological role, light-harvesting photosynthetic bile pigment-protein from the phycobiliprotein complex. Allophycocyanin has a maximum absorption at approximately 650 nanometers. This is Allophycocyanin beta chain (apcB) from Synechococcus sp. (strain ATCC 27144 / PCC 6301 / SAUG 1402/1) (Anacystis nidulans).